Here is a 159-residue protein sequence, read N- to C-terminus: Nucleotide-binding protein Avin_13410 (159 aa).

It belongs to the YajQ family.

Nucleotide-binding protein. The protein is Nucleotide-binding protein Avin_13410 of Azotobacter vinelandii (strain DJ / ATCC BAA-1303).